Reading from the N-terminus, the 461-residue chain is Phosphoglucosamine mutase (461 aa).

The Phosphoserine intermediate role is filled by S107. 4 residues coordinate Mg(2+): S107, D254, D256, and D258. Phosphoserine is present on S107.

Belongs to the phosphohexose mutase family. The cofactor is Mg(2+). In terms of processing, activated by phosphorylation.

It carries out the reaction alpha-D-glucosamine 1-phosphate = D-glucosamine 6-phosphate. In terms of biological role, catalyzes the conversion of glucosamine-6-phosphate to glucosamine-1-phosphate. This is Phosphoglucosamine mutase from Bifidobacterium longum subsp. infantis (strain ATCC 15697 / DSM 20088 / JCM 1222 / NCTC 11817 / S12).